We begin with the raw amino-acid sequence, 499 residues long: Alpha-internexin (499 aa).

Residues 1–87 (MSFGSEHYLC…SQAAARTNEY (87 aa)) form a head region. Ser-72 carries the post-translational modification Phosphoserine. A coil 1A region spans residues 88 to 129 (KIIRTNEKEQLQGLNDRFAVFIEKVHQLETQNRALEAELAAL). An IF rod domain is found at 94–407 (EKEQLQGLND…KLLEGEETRF (314 aa)). Residues 130-142 (RQRHAEPSRVGEL) are linker 1. The tract at residues 143–238 (FQRELRDLRA…QVHDEEVAEL (96 aa)) is coil 1B. Phosphoserine is present on Ser-219. Residues 239 to 262 (LATLQASSQAAAEVDVTVAKPDLT) are linker 2. The interval 263-408 (SALREIRAQY…LLEGEETRFS (146 aa)) is coil 2. Lys-290 carries the post-translational modification N6-acetyllysine. At Ser-335 the chain carries Phosphoserine. Residues 409 to 499 (TSGLSISGLN…EETTISSQKI (91 aa)) form a tail region. A disordered region spans residues 441-466 (STGLSLKKEEEEEEASKVASKKTSQI). Residues Ser-469 and Ser-496 each carry the phosphoserine modification.

This sequence belongs to the intermediate filament family. In terms of assembly, forms homodimers (in vitro). Forms heterodimers with NEFL, NEFM or NEFH (in vitro). Post-translationally, O-glycosylated. As to expression, found predominantly in adult CNS.

Functionally, class-IV neuronal intermediate filament that is able to self-assemble. It is involved in the morphogenesis of neurons. It may form an independent structural network without the involvement of other neurofilaments or it may cooperate with NEFL to form the filamentous backbone to which NEFM and NEFH attach to form the cross-bridges. May also cooperate with the neuronal intermediate filament protein PRPH to form filamentous networks. The protein is Alpha-internexin (INA) of Homo sapiens (Human).